The chain runs to 99 residues: Small ribosomal subunit protein bS20 (99 aa).

This sequence belongs to the bacterial ribosomal protein bS20 family.

Binds directly to 16S ribosomal RNA. The polypeptide is Small ribosomal subunit protein bS20 (Thermomicrobium roseum (strain ATCC 27502 / DSM 5159 / P-2)).